The following is a 385-amino-acid chain: 4-hydroxy-3-methylbut-2-en-1-yl diphosphate synthase (flavodoxin) (385 aa).

4 residues coordinate [4Fe-4S] cluster: cysteine 282, cysteine 285, cysteine 317, and glutamate 324.

It belongs to the IspG family. [4Fe-4S] cluster serves as cofactor.

It carries out the reaction (2E)-4-hydroxy-3-methylbut-2-enyl diphosphate + oxidized [flavodoxin] + H2O + 2 H(+) = 2-C-methyl-D-erythritol 2,4-cyclic diphosphate + reduced [flavodoxin]. The protein operates within isoprenoid biosynthesis; isopentenyl diphosphate biosynthesis via DXP pathway; isopentenyl diphosphate from 1-deoxy-D-xylulose 5-phosphate: step 5/6. Functionally, converts 2C-methyl-D-erythritol 2,4-cyclodiphosphate (ME-2,4cPP) into 1-hydroxy-2-methyl-2-(E)-butenyl 4-diphosphate. This is 4-hydroxy-3-methylbut-2-en-1-yl diphosphate synthase (flavodoxin) from Nocardia farcinica (strain IFM 10152).